A 424-amino-acid polypeptide reads, in one-letter code: DNA repair protein Rad60 (424 aa).

The residue at position 26 (Y26) is a Phosphotyrosine. Phosphoserine occurs at positions 32 and 34. A disordered region spans residues 45–177 (LPKKSTKTGK…LTTTTSNSAS (133 aa)). Basic residues predominate over residues 48–57 (KSTKTGKRKN). Basic and acidic residues predominate over residues 77 to 93 (QAEHKAVEPEEDMRTER). Position 96 is a phosphoserine (S96). Positions 104–123 (EMEKKNGQQSDVEKHAKEND) are enriched in basic and acidic residues. Residues 156-166 (KPKKRGQKKRT) are compositionally biased toward basic residues. A compositionally biased stretch (low complexity) spans 167–177 (SLTTTTSNSAS).

In terms of assembly, forms a complex with dgrn; likely required for localization to the nuclear periphery. Interacts with the SMC5-SMC6 complex members SMC5 and SMC6/jnj following ionizing radiation (IR) to induce DNA damage. Interaction between the SMC5-SMC6 complex and the dgrn-Rad60 complex, may stabilize the association of heterochromatic DSBs with the nuclear periphery.

It localises to the nucleus. The protein localises to the nucleoplasm. Functionally, required for repair of DNA double strand breaks which occur during replication or are induced by ionizing radiation (IR). Functions with dgrn and downstream of the SMC5-SMC6 complex to regulate strand break repair. Likely functions by stabilizing the association of heterochromatic double strand breaks (DSBs) with the nuclear periphery as part of the homologous recombination (HR) repair process. The protein is DNA repair protein Rad60 of Drosophila melanogaster (Fruit fly).